Reading from the N-terminus, the 62-residue chain is Calmodulin regulator protein PCP4 (62 aa).

A disordered region spans residues 1 to 39 (MSERQGAGATNGKDKTSGENDGQKKVQEEFDIDMDAPET). Residues 12-28 (GKDKTSGENDGQKKVQE) are compositionally biased toward basic and acidic residues. Residues 28-40 (EEFDIDMDAPETE) are acidic; binds calcium and is required for modulating the calcium-binding kinetics of calmodulin. Residues 39-62 (TERAAVAIQSQFRKFQKKKAGSQS) form the IQ domain.

It belongs to the PCP4 family. In terms of assembly, binds to both calcium-free and calcium-bound calmodulin. The affinity for the calcium-bound form is 50-fold greater.

Functionally, functions as a modulator of calcium-binding by calmodulin. Thereby, regulates calmodulin activity and the different processes it controls. For instance, may play a role in neuronal differentiation through activation of calmodulin-dependent kinase signaling pathways. The sequence is that of Calmodulin regulator protein PCP4 from Homo sapiens (Human).